The primary structure comprises 335 residues: MQQLIHRIWYQGHQAKWLLLPLSGIFWFISYIRRLLFSFGFKQAQVLPVPVIVVGNITAGGSGKTPTVIYLIELLRQHGYKPGVISRGYGVNVDGVVAVTPNAKASDVGDEPAMIVARTQVPMVVGAKRVSAAQTLLTDFDVDVIISDDGLQHYALGRDIEIALVDGERRYGNHCLLPAGPLREGLWRLNSVDFVINNGGPAQNGEVLMALEPAPLCLVDNNLQDKFNQQNSVVAMAGIGNPQRFFNSISQLGYKVVKTVEFADHQAFDQKQLSDLSVQHSLLMTEKDAVKCRDFAQSNWWYLPVNAKLNSEFDHALLSQLQQVAQTKKGLSHGI.

Position 58-65 (Thr-58–Thr-65) interacts with ATP.

It belongs to the LpxK family.

The enzyme catalyses a lipid A disaccharide + ATP = a lipid IVA + ADP + H(+). The protein operates within glycolipid biosynthesis; lipid IV(A) biosynthesis; lipid IV(A) from (3R)-3-hydroxytetradecanoyl-[acyl-carrier-protein] and UDP-N-acetyl-alpha-D-glucosamine: step 6/6. Transfers the gamma-phosphate of ATP to the 4'-position of a tetraacyldisaccharide 1-phosphate intermediate (termed DS-1-P) to form tetraacyldisaccharide 1,4'-bis-phosphate (lipid IVA). This is Tetraacyldisaccharide 4'-kinase from Shewanella frigidimarina (strain NCIMB 400).